The chain runs to 254 residues: Galactitol 2-dehydrogenase (L-tagatose-forming) (254 aa).

NAD(+) contacts are provided by residues 21–23 (SGI), aspartate 42, 66–67 (DV), tyrosine 159, lysine 163, and 192–194 (VAT). The Proton acceptor role is filled by tyrosine 159. Residue tryptophan 254 coordinates Mg(2+).

It belongs to the short-chain dehydrogenases/reductases (SDR) family. As to quaternary structure, homotetramer. It depends on a divalent metal cation as a cofactor.

It catalyses the reaction galactitol + NAD(+) = keto-L-tagatose + NADH + H(+). Inhibited by the chelating agents EDTA and alpha,alpha'-dipyridyl. Inhibited by Zn(2+) and Fe(2+). Functionally, catalyzes the interconversion of galactitol to the rare sugar L-tagatose. Shows activity with a wide range of substrates, and catalyzes the oxidation of a variety of polyvalent aliphatic alcohols and polyols to the corresponding ketones and ketoses, respectively, and in the reverse reaction, it reduces ketones with high stereoselectivity yielding the corresponding S-configurated alcohols. Shows high activity with D-threitol, xylitol, 1,2-hexanediol, 1,2-pentanediol, 2-hexanol, L-erythrulose, D-ribulose and acetoin. Specific for NAD(+). The protein is Galactitol 2-dehydrogenase (L-tagatose-forming) of Cereibacter sphaeroides (Rhodobacter sphaeroides).